Reading from the N-terminus, the 63-residue chain is Large ribosomal subunit protein uL30 (63 aa).

The protein belongs to the universal ribosomal protein uL30 family. As to quaternary structure, part of the 50S ribosomal subunit.

The chain is Large ribosomal subunit protein uL30 from Methylobacterium sp. (strain 4-46).